Reading from the N-terminus, the 128-residue chain is Large ribosomal subunit protein bL17 (128 aa).

It belongs to the bacterial ribosomal protein bL17 family. As to quaternary structure, part of the 50S ribosomal subunit. Contacts protein L32.

The sequence is that of Large ribosomal subunit protein bL17 from Petrotoga mobilis (strain DSM 10674 / SJ95).